We begin with the raw amino-acid sequence, 350 residues long: Heat-inducible transcription repressor HrcA (350 aa).

The protein belongs to the HrcA family.

Negative regulator of class I heat shock genes (grpE-dnaK-dnaJ and groELS operons). Prevents heat-shock induction of these operons. The polypeptide is Heat-inducible transcription repressor HrcA (Limosilactobacillus reuteri (strain DSM 20016) (Lactobacillus reuteri)).